Reading from the N-terminus, the 193-residue chain is dTTP/UTP pyrophosphatase (193 aa).

The active-site Proton acceptor is the aspartate 68.

This sequence belongs to the Maf family. YhdE subfamily. It depends on a divalent metal cation as a cofactor.

The protein resides in the cytoplasm. It catalyses the reaction dTTP + H2O = dTMP + diphosphate + H(+). The enzyme catalyses UTP + H2O = UMP + diphosphate + H(+). Nucleoside triphosphate pyrophosphatase that hydrolyzes dTTP and UTP. May have a dual role in cell division arrest and in preventing the incorporation of modified nucleotides into cellular nucleic acids. This chain is dTTP/UTP pyrophosphatase, found in Ruegeria sp. (strain TM1040) (Silicibacter sp.).